An 846-amino-acid polypeptide reads, in one-letter code: Arsenate respiratory reductase molybdopterin-containing subunit ArrA (846 aa).

A signal peptide (tat-type signal) is located at residues 1-29 (MRIKRREFLKASAAVGAVAVASPTLNAFA). The 4Fe-4S Mo/W bis-MGD-type domain occupies 43-99 (GKWIPSTCQGCTTWCPVEFLFRMAVRSKYAATQLSKANNGYCCVRGHLMLQQLYDPD). [4Fe-4S] cluster contacts are provided by C50, C53, C57, and C85. R155 lines the arsenite pocket. Residue Y156 coordinates arsenate. H179 contacts arsenite. Arsenate is bound at residue S180. C183 lines the Mo-bis(molybdopterin guanine dinucleotide) pocket. K188 is a binding site for arsenate. Y200 lines the arsenite pocket.

It belongs to the prokaryotic molybdopterin-containing oxidoreductase family. In terms of assembly, heterodimer composed of one large subunit (ArrA) and one small subunit (ArrB). It depends on [4Fe-4S] cluster as a cofactor. Mo-bis(molybdopterin guanine dinucleotide) is required as a cofactor. Predicted to be exported by the Tat system. The position of the signal peptide cleavage has been experimentally proven.

The protein resides in the periplasm. It catalyses the reaction arsenite + A + H2O = arsenate + AH2 + H(+). In terms of biological role, component of the arsenate respiratory reductase (Arr) complex, which catalyzes the reduction of arsenate (As(V)) to arsenite (As(III)). Can use acetate as the electron donor. ArrA is the arsenate-binding subunit. This Chrysiogenes arsenatis protein is Arsenate respiratory reductase molybdopterin-containing subunit ArrA.